We begin with the raw amino-acid sequence, 93 residues long: Small ribosomal subunit protein uS19 (93 aa).

Residues 72 to 93 form a disordered region; the sequence is GEFSPTRTYRGHNKKDKKMQKK. Basic residues predominate over residues 80–93; it reads YRGHNKKDKKMQKK.

Belongs to the universal ribosomal protein uS19 family.

Its function is as follows. Protein S19 forms a complex with S13 that binds strongly to the 16S ribosomal RNA. In Aster yellows witches'-broom phytoplasma (strain AYWB), this protein is Small ribosomal subunit protein uS19.